Consider the following 400-residue polypeptide: Elongation factor Tu (400 aa).

One can recognise a tr-type G domain in the interval 10–209 (KPHVNIGTIG…NVDAYIPTPE (200 aa)). The segment at 19-26 (GHVDHGKT) is G1. A GTP-binding site is contributed by 19–26 (GHVDHGKT). T26 lines the Mg(2+) pocket. The interval 60-64 (GITIN) is G2. A G3 region spans residues 81–84 (DCPG). GTP is bound by residues 81-85 (DCPGH) and 136-139 (NKSD). The segment at 136–139 (NKSD) is G4. The tract at residues 174–176 (SGL) is G5.

The protein belongs to the TRAFAC class translation factor GTPase superfamily. Classic translation factor GTPase family. EF-Tu/EF-1A subfamily. In terms of assembly, monomer.

It localises to the cytoplasm. The enzyme catalyses GTP + H2O = GDP + phosphate + H(+). In terms of biological role, GTP hydrolase that promotes the GTP-dependent binding of aminoacyl-tRNA to the A-site of ribosomes during protein biosynthesis. The protein is Elongation factor Tu of Desulforamulus reducens (strain ATCC BAA-1160 / DSM 100696 / MI-1) (Desulfotomaculum reducens).